Consider the following 305-residue polypeptide: MPINIPDDLPAASILESEKIFVMNENRARHQDIRPLEILIFNLMPSKVETETQILRLLSNSPIQIDIDLLRTETYISKHTSQDYLQHFYKTFNEIKNKKYDGMIITGAPVENMPYESVKYWKEFCEILDWSLTNSFSTMHICWGALAALYYHYGIPKHPLDEKISGIYAHVPLEYYHPLLRGFDDVFYMPHSRYMTVKESDLKGDLKVLARSEETGPAIIMSDKLRQVFVTGHLEYDTMTLANEYKRDLEKGLHPVIPENYFPDNDPNAAPKKLWRSHASLLFSNWLNYYVYQQTPYDLLKIGRS.

Cysteine 142 serves as the catalytic Acyl-thioester intermediate. 2 residues coordinate substrate: lysine 163 and serine 192. The Proton acceptor role is filled by histidine 233. The active site involves glutamate 235. Residue arginine 247 participates in substrate binding.

The protein belongs to the MetA family.

It is found in the cytoplasm. It carries out the reaction L-homoserine + acetyl-CoA = O-acetyl-L-homoserine + CoA. The protein operates within amino-acid biosynthesis; L-methionine biosynthesis via de novo pathway; O-acetyl-L-homoserine from L-homoserine: step 1/1. Its function is as follows. Transfers an acetyl group from acetyl-CoA to L-homoserine, forming acetyl-L-homoserine. This Methanomassiliicoccus intestinalis (strain Issoire-Mx1) protein is Homoserine O-acetyltransferase.